The following is a 426-amino-acid chain: 3-phosphoshikimate 1-carboxyvinyltransferase (426 aa).

3-phosphoshikimate is bound by residues K22, S23, and R27. K22 contributes to the phosphoenolpyruvate binding site. Positions 96 and 124 each coordinate phosphoenolpyruvate. 7 residues coordinate 3-phosphoshikimate: S170, S171, Q172, S198, D314, N337, and K341. A phosphoenolpyruvate-binding site is contributed by Q172. The active-site Proton acceptor is D314. Phosphoenolpyruvate is bound by residues R345, R387, and K412.

Belongs to the EPSP synthase family. In terms of assembly, monomer.

The protein resides in the cytoplasm. It carries out the reaction 3-phosphoshikimate + phosphoenolpyruvate = 5-O-(1-carboxyvinyl)-3-phosphoshikimate + phosphate. The protein operates within metabolic intermediate biosynthesis; chorismate biosynthesis; chorismate from D-erythrose 4-phosphate and phosphoenolpyruvate: step 6/7. In terms of biological role, catalyzes the transfer of the enolpyruvyl moiety of phosphoenolpyruvate (PEP) to the 5-hydroxyl of shikimate-3-phosphate (S3P) to produce enolpyruvyl shikimate-3-phosphate and inorganic phosphate. The protein is 3-phosphoshikimate 1-carboxyvinyltransferase of Shewanella baltica (strain OS155 / ATCC BAA-1091).